The chain runs to 660 residues: Anoctamin-10 (660 aa).

Topologically, residues 1 to 207 (MKVTLSALDT…DSIRGYFGET (207 aa)) are cytoplasmic. The helical transmembrane segment at 208 to 228 (IALYFGFLEYFTFALIPMAVI) threads the bilayer. At 229 to 240 (GLPYYLFVWEDY) the chain is on the extracellular side. The helical transmembrane segment at 241–261 (DKYVIFASFNLIWSTVILELW) threads the bilayer. Over 262-316 (KRGCANMTYRWGTLLMKRKFEEPRPGFHGVLGINSITGKEEPLYPSYKRQLRIYL) the chain is Cytoplasmic. Residues 317 to 337 (VSLPFVCLCLYFSLYVMMIYF) form a helical membrane-spanning segment. The Extracellular portion of the chain corresponds to 338–352 (DMEVWALGLHENSGS). The helical transmembrane segment at 353-373 (EWTSVLLYVPSIIYAIVIEIM) threads the bilayer. The Cytoplasmic portion of the chain corresponds to 374–400 (NRLYRYAAEFLTSWENHRLESAYQNHL). A helical transmembrane segment spans residues 401–421 (ILKVLVFNFLNCFASLFYIAF). Topologically, residues 422 to 500 (VLKDMKLLRQ…YLGTFDDYLE (79 aa)) are extracellular. A helical membrane pass occupies residues 501-521 (LFLQFGYVSLFSCVYPLAAAF). The Cytoplasmic segment spans residues 522 to 553 (AVLNNFTEVNSDALKMCRVFKRPFSEPSANIG). The chain crosses the membrane as a helical span at residues 554–574 (VWQLAFETMSVISVVTNCALI). Topologically, residues 575–590 (GMSPQVNAVFPESKAD) are extracellular. A helical membrane pass occupies residues 591–611 (LILIVVAVEHALLALKFILAF). The Cytoplasmic segment spans residues 612 to 660 (AIPDKPRHIQMKLARLEFESLEALKQQQMKLVTENLKEEPMESGKEKAT).

It belongs to the anoctamin family. In terms of tissue distribution, highly expressed in the brain. Intermediate levels in the retina and heart and low levels in the placenta, liver, lung, duodenum, kidney, testis and spleen. In brain areas, highest expression in the frontal and occipital cortices and in the cerebellum. Lower expression in the fetal brain than in the adult brain.

It is found in the cell membrane. Its function is as follows. Does not exhibit calcium-activated chloride channel (CaCC) activity. Can inhibit the activity of ANO1. The protein is Anoctamin-10 (ANO10) of Homo sapiens (Human).